A 174-amino-acid chain; its full sequence is Secreted protein A (174 aa).

Positions 1-19 are cleaved as a signal peptide; the sequence is MRLLITLFAIFALFNCSLA. Asn-156 carries an N-linked (GlcNAc...) asparagine glycan.

The protein belongs to the Sct family. Post-translationally, probably contains disulfide bonds.

Its subcellular location is the secreted. The protein resides in the extracellular vesicle. This is Secreted protein A (p17) from Dictyostelium discoideum (Social amoeba).